The primary structure comprises 685 residues: ABC transporter G family member 26 (685 aa).

The 265-residue stretch at 65-329 (LKFEDVEYKV…FSSLRILPEI (265 aa)) folds into the ABC transporter domain. Residue 124 to 131 (GPSGSGKT) participates in ATP binding. Residues 414-623 (DQFLILSRRT…GFRLLLKVQY (210 aa)) form the ABC transmembrane type-2 domain. The next 6 helical transmembrane spans lie at 432–452 (FDKLRLVQSLGVAVVLGLLWW), 468–488 (LMFYICIFWTSSSLFGAVYVF), 518–538 (MVAHVLYPTFFMIIVYFMAEF), 542–562 (IPCFLFTVLTILLIAITSQGA), 576–596 (AGMIASLVLMLFLLTGGYYVQ), and 648–668 (TINLNGGLQELWVLLAMAFGY).

The protein belongs to the ABC transporter superfamily. ABCG family. Eye pigment precursor importer (TC 3.A.1.204) subfamily. In terms of assembly, homo- or heterodimer. In terms of tissue distribution, mostly expressed in flowers, especially in tapetum within anthers.

Its subcellular location is the cell membrane. The protein resides in the endoplasmic reticulum membrane. Functionally, mediates the transport of sporopollenin precursors (e.g. polyketides) across the tapetum plasma membrane into the anther locule for polymerization on developing microspore walls, thus being required for male fertility and pollen exine formation and patterning prior to tapetum programmed cell death. This chain is ABC transporter G family member 26, found in Arabidopsis thaliana (Mouse-ear cress).